The sequence spans 831 residues: Multiphosphoryl transfer protein (831 aa).

The region spanning 1–90 (MLTIQFLCPL…EYIQVRFIDS (90 aa)) is the HPr domain. Residue His-15 is the Pros-phosphohistidine intermediate; for HPr activity of the active site. His-15 carries the phosphohistidine; by EI modification. Residues 119–650 (GNVLASGVGV…AVKSQLRQLD (532 aa)) form a PTS EI region. Residue His-298 is the Tele-phosphohistidine intermediate; for PTS EI activity of the active site. The residue at position 298 (His-298) is a Phosphohistidine; by autocatalysis. Phosphoenolpyruvate contacts are provided by Arg-405 and Arg-441. The Mg(2+) site is built by Glu-540 and Asp-564. Phosphoenolpyruvate is bound by residues 563 to 564 (ND) and Arg-574. The Proton donor; for EI activity role is filled by Cys-611. Positions 685 to 828 (PLLALENIFV…QSILTLLETE (144 aa)) constitute a PTS EIIA type-2 domain. Residue His-747 is the Tele-phosphohistidine intermediate; for PTS EIIA activity of the active site. Position 747 is a phosphohistidine; by HPr (His-747).

It belongs to the PEP-utilizing enzyme family. The cofactor is Mg(2+).

The protein resides in the cytoplasm. The enzyme catalyses L-histidyl-[protein] + phosphoenolpyruvate = N(pros)-phospho-L-histidyl-[protein] + pyruvate. It carries out the reaction D-fructose(out) + N(pros)-phospho-L-histidyl-[protein] = D-fructose 1-phosphate(in) + L-histidyl-[protein]. Functionally, multifunctional protein that includes general (non sugar-specific) and sugar-specific components of the phosphoenolpyruvate-dependent sugar phosphotransferase system (sugar PTS). This major carbohydrate active transport system catalyzes the phosphorylation of incoming sugar substrates concomitantly with their translocation across the cell membrane. The enzyme II FryABC PTS system is involved in fructose transport. This Escherichia coli O6:H1 (strain CFT073 / ATCC 700928 / UPEC) protein is Multiphosphoryl transfer protein (fryA).